The primary structure comprises 167 residues: Ribosome maturation factor RimM (167 aa).

One can recognise a PRC barrel domain in the interval 94 to 166; it reads DDRAWLHELE…YIHVPRFDEF (73 aa).

Belongs to the RimM family. Binds ribosomal protein uS19.

It is found in the cytoplasm. An accessory protein needed during the final step in the assembly of 30S ribosomal subunit, possibly for assembly of the head region. Essential for efficient processing of 16S rRNA. May be needed both before and after RbfA during the maturation of 16S rRNA. It has affinity for free ribosomal 30S subunits but not for 70S ribosomes. The sequence is that of Ribosome maturation factor RimM from Chlorobium luteolum (strain DSM 273 / BCRC 81028 / 2530) (Pelodictyon luteolum).